Here is a 408-residue protein sequence, read N- to C-terminus: Acetylornithine aminotransferase (408 aa).

Pyridoxal 5'-phosphate is bound by residues 107–108 (GT) and F141. R144 is a N(2)-acetyl-L-ornithine binding site. Position 227 to 230 (227 to 230 (DEIQ)) interacts with pyridoxal 5'-phosphate. N6-(pyridoxal phosphate)lysine is present on K256. T284 is a N(2)-acetyl-L-ornithine binding site. T285 provides a ligand contact to pyridoxal 5'-phosphate.

The protein belongs to the class-III pyridoxal-phosphate-dependent aminotransferase family. ArgD subfamily. As to quaternary structure, homodimer. It depends on pyridoxal 5'-phosphate as a cofactor.

Its subcellular location is the cytoplasm. It catalyses the reaction N(2)-acetyl-L-ornithine + 2-oxoglutarate = N-acetyl-L-glutamate 5-semialdehyde + L-glutamate. The protein operates within amino-acid biosynthesis; L-arginine biosynthesis; N(2)-acetyl-L-ornithine from L-glutamate: step 4/4. This chain is Acetylornithine aminotransferase, found in Xanthomonas campestris pv. campestris (strain ATCC 33913 / DSM 3586 / NCPPB 528 / LMG 568 / P 25).